Consider the following 500-residue polypeptide: Cytochrome P450 71B34 (500 aa).

Residues Met1–Asn21 form a helical membrane-spanning segment. Position 440 (Cys440) interacts with heme.

This sequence belongs to the cytochrome P450 family. It depends on heme as a cofactor.

The protein resides in the membrane. This is Cytochrome P450 71B34 (CYP71B34) from Arabidopsis thaliana (Mouse-ear cress).